A 446-amino-acid polypeptide reads, in one-letter code: Argininosuccinate lyase (446 aa).

The protein belongs to the lyase 1 family. Argininosuccinate lyase subfamily.

The protein resides in the cytoplasm. It catalyses the reaction 2-(N(omega)-L-arginino)succinate = fumarate + L-arginine. The protein operates within amino-acid biosynthesis; L-arginine biosynthesis; L-arginine from L-ornithine and carbamoyl phosphate: step 3/3. The sequence is that of Argininosuccinate lyase from Phocaeicola vulgatus (strain ATCC 8482 / DSM 1447 / JCM 5826 / CCUG 4940 / NBRC 14291 / NCTC 11154) (Bacteroides vulgatus).